Consider the following 225-residue polypeptide: UPF0758 protein AZOSEA04420 (225 aa).

An MPN domain is found at 102-225; it reads VFESPLAVRN…PLSFAERGLL (124 aa). 3 residues coordinate Zn(2+): His173, His175, and Asp186. The JAMM motif motif lies at 173–186; it reads HNHPSGAAEPSPAD.

The protein belongs to the UPF0758 family.

The chain is UPF0758 protein AZOSEA04420 from Aromatoleum aromaticum (strain DSM 19018 / LMG 30748 / EbN1) (Azoarcus sp. (strain EbN1)).